The chain runs to 231 residues: uncharacterized protein (231 aa).

Residues 1–25 (MAKWVPALLLRRVPLFSLRFRPASS) form the signal peptide. The Extracellular portion of the chain corresponds to 26–200 (TFLPVLAATE…SRPSPSATLT (175 aa)). The disordered stretch occupies residues 39–64 (SVPSGDLSMPVKTRAEGEDDGFGEAG). A helical membrane pass occupies residues 201–225 (LLLASSCLLAPAPPSFILLLFTLIA). Residues 226–231 (PDLPHS) lie on the Cytoplasmic side of the membrane.

The protein localises to the membrane. This is an uncharacterized protein from Homo sapiens (Human).